Consider the following 37-residue polypeptide: Large ribosomal subunit protein bL36c (37 aa).

Belongs to the bacterial ribosomal protein bL36 family.

The protein localises to the plastid. The protein resides in the chloroplast. In Dioscorea elephantipes (Elephant's foot yam), this protein is Large ribosomal subunit protein bL36c.